The following is a 149-amino-acid chain: Large ribosomal subunit protein bL9 (149 aa).

Belongs to the bacterial ribosomal protein bL9 family.

Binds to the 23S rRNA. This chain is Large ribosomal subunit protein bL9, found in Haemophilus influenzae (strain PittEE).